Reading from the N-terminus, the 188-residue chain is MFIASAYAQNTETSIEHIKKVAEHANRVFPPFDFVHFSSHFFWLAISFGFFYLFISRVIAPRIGGVIETRRDRIASDLDQAMRMKQEADTVVETYERELAEARLKAHTIAQAAGEELKQKAELERKEIEERLEKKLADAEKQIAKIRDKAMQNVGSIAEEVTLGIVKKLIDVDINKETVRSVIKTANY.

Residues 35–55 (VHFSSHFFWLAISFGFFYLFI) form a helical membrane-spanning segment.

The protein belongs to the ATPase B chain family. In terms of assembly, F-type ATPases have 2 components, F(1) - the catalytic core - and F(0) - the membrane proton channel. F(1) has five subunits: alpha(3), beta(3), gamma(1), delta(1), epsilon(1). F(0) has three main subunits: a(1), b(2) and c(10-14). The alpha and beta chains form an alternating ring which encloses part of the gamma chain. F(1) is attached to F(0) by a central stalk formed by the gamma and epsilon chains, while a peripheral stalk is formed by the delta and b chains.

Its subcellular location is the cell inner membrane. Functionally, f(1)F(0) ATP synthase produces ATP from ADP in the presence of a proton or sodium gradient. F-type ATPases consist of two structural domains, F(1) containing the extramembraneous catalytic core and F(0) containing the membrane proton channel, linked together by a central stalk and a peripheral stalk. During catalysis, ATP synthesis in the catalytic domain of F(1) is coupled via a rotary mechanism of the central stalk subunits to proton translocation. Its function is as follows. Component of the F(0) channel, it forms part of the peripheral stalk, linking F(1) to F(0). The protein is ATP synthase subunit b 1 of Bartonella tribocorum (strain CIP 105476 / IBS 506).